A 506-amino-acid chain; its full sequence is Histidine--tRNA ligase, mitochondrial (506 aa).

Residues 1 to 33 constitute a mitochondrion transit peptide; sequence MHLLGLLPRRAWASLLSQLLRPPWASCTGAVRC. Serine 67 bears the Phosphoserine mark. L-histidine is bound by residues 131–133, arginine 158, glutamine 174, aspartate 178, arginine 327, and 331–332; these read DLT and YY. Lysine 444 carries the post-translational modification N6-acetyllysine.

It belongs to the class-II aminoacyl-tRNA synthetase family. In terms of assembly, homodimer.

The protein resides in the mitochondrion. The catalysed reaction is tRNA(His) + L-histidine + ATP = L-histidyl-tRNA(His) + AMP + diphosphate + H(+). In terms of biological role, mitochondrial aminoacyl-tRNA synthetase that catalyzes the ATP-dependent ligation of histidine to the 3'-end of its cognate tRNA, via the formation of an aminoacyl-adenylate intermediate (His-AMP). The sequence is that of Histidine--tRNA ligase, mitochondrial (HARS2) from Pongo abelii (Sumatran orangutan).